The following is a 521-amino-acid chain: Acidic amino acid decarboxylase GADL1 (521 aa).

Residues Met1–Asp12 show a composition bias toward basic and acidic residues. The interval Met1 to Met20 is disordered. Lys333 is subject to N6-(pyridoxal phosphate)lysine.

The protein belongs to the group II decarboxylase family. As to quaternary structure, homodimer. It depends on pyridoxal 5'-phosphate as a cofactor. Expressed at highest levels in skeletal muscles. Also detected heart, spleen and rumen.

It catalyses the reaction L-aspartate + H(+) = beta-alanine + CO2. The enzyme catalyses 3-sulfino-L-alanine + H(+) = hypotaurine + CO2. The catalysed reaction is L-cysteate + H(+) = taurine + CO2. Catalyzes the decarboxylation of L-aspartate, 3-sulfino-L-alanine (cysteine sulfinic acid), and L-cysteate to beta-alanine, hypotaurine and taurine, respectively. The preferred substrate is L-aspartate. Does not exhibit any decarboxylation activity toward glutamate. The polypeptide is Acidic amino acid decarboxylase GADL1 (GADL1) (Bos taurus (Bovine)).